A 666-amino-acid chain; its full sequence is Long chain acyl-CoA synthetase 5 (666 aa).

228–239 contacts ATP; sequence IMYTSGTTGDPK. Residues 495 to 519 are fatty acid-binding; the sequence is DGWLHTGDVGEWQPNGSMKIIDRKK.

The protein belongs to the ATP-dependent AMP-binding enzyme family. It depends on Mg(2+) as a cofactor.

It carries out the reaction a long-chain fatty acid + ATP + CoA = a long-chain fatty acyl-CoA + AMP + diphosphate. Its pathway is lipid metabolism; fatty acid metabolism. Functionally, activation of long-chain fatty acids for both synthesis of cellular lipids, and degradation via beta-oxidation. Preferentially uses palmitate, palmitoleate, oleate and linoleate. This is Long chain acyl-CoA synthetase 5 (LACS5) from Arabidopsis thaliana (Mouse-ear cress).